The following is a 324-amino-acid chain: Dioxygenase tasH (324 aa).

An N-terminal signal peptide occupies residues 1-25; the sequence is MRSMSLWMLIGPVTGIATWASLRYA. Positions 50, 96, and 284 each coordinate Zn(2+).

This sequence belongs to the DODA-type extradiol aromatic ring-opening dioxygenase family. In terms of assembly, monomer. Zn(2+) serves as cofactor.

Functionally, dioxygenase; part of the gene cluster that mediates the biosynthesis of the tetramic acids Sch210971 and Sch210972, potential anti-HIV fungal natural product that contain a decalin core. The PKS module of tasS together with the enoylreductase tasC catalyze the formation of the polyketide unit which is then conjugated to 4-hydroxyl-4-methyl glutamate (HMG) by the condensation domain of the tasS NRPS module. One unique structural feature of Sch210971 and Sch210972 is the tetramic acid motif proposed to be derived from the non-proteinogenic amino acid HMG, by a Dieckmann-type condensation catalyzed by the reductase domain of tasS. The aldolase tasA catalyzes the aldol condensation of 2 molecules of pyruvic acid to yield the intermediate 4-hydroxyl-4-methyl-2-oxoglutarate (HMOG), which can then be stereoselectively transaminated, may be by tasG, to form HMG. The Diels-Alderase tas3 then uses the Dieckmann product of tasS as substrate and catalyzes the Diels-Alder cycloaddition to form the decalin ring of Sch210971 and Sch210972. The chain is Dioxygenase tasH from Hapsidospora irregularis.